Here is a 906-residue protein sequence, read N- to C-terminus: Aconitate hydratase A (906 aa).

3 residues coordinate [4Fe-4S] cluster: cysteine 443, cysteine 509, and cysteine 512.

The protein belongs to the aconitase/IPM isomerase family. As to quaternary structure, monomer. [4Fe-4S] cluster serves as cofactor.

It catalyses the reaction citrate = D-threo-isocitrate. The catalysed reaction is (2S,3R)-3-hydroxybutane-1,2,3-tricarboxylate = 2-methyl-cis-aconitate + H2O. It functions in the pathway carbohydrate metabolism; tricarboxylic acid cycle; isocitrate from oxaloacetate: step 2/2. The protein operates within organic acid metabolism; propanoate degradation. Functionally, involved in the catabolism of short chain fatty acids (SCFA) via the tricarboxylic acid (TCA)(acetyl degradation route) and probably via the 2-methylcitrate cycle I (propionate degradation route). Catalyzes the reversible isomerization of citrate to isocitrate via cis-aconitate. Could catalyze the hydration of 2-methyl-cis-aconitate to yield (2R,3S)-2-methylisocitrate. The apo form of AcnA functions as a RNA-binding regulatory protein. The protein is Aconitate hydratase A of Bradyrhizobium diazoefficiens (strain JCM 10833 / BCRC 13528 / IAM 13628 / NBRC 14792 / USDA 110).